The primary structure comprises 183 residues: ATP synthase subunit b, chloroplastic (183 aa).

The chain crosses the membrane as a helical span at residues Asp25 to Gly45.

Belongs to the ATPase B chain family. As to quaternary structure, F-type ATPases have 2 components, F(1) - the catalytic core - and F(0) - the membrane proton channel. F(1) has five subunits: alpha(3), beta(3), gamma(1), delta(1), epsilon(1). F(0) has four main subunits: a(1), b(1), b'(1) and c(10-14). The alpha and beta chains form an alternating ring which encloses part of the gamma chain. F(1) is attached to F(0) by a central stalk formed by the gamma and epsilon chains, while a peripheral stalk is formed by the delta, b and b' chains.

The protein localises to the plastid. It localises to the chloroplast thylakoid membrane. F(1)F(0) ATP synthase produces ATP from ADP in the presence of a proton or sodium gradient. F-type ATPases consist of two structural domains, F(1) containing the extramembraneous catalytic core and F(0) containing the membrane proton channel, linked together by a central stalk and a peripheral stalk. During catalysis, ATP synthesis in the catalytic domain of F(1) is coupled via a rotary mechanism of the central stalk subunits to proton translocation. Its function is as follows. Component of the F(0) channel, it forms part of the peripheral stalk, linking F(1) to F(0). The chain is ATP synthase subunit b, chloroplastic from Zea mays (Maize).